Reading from the N-terminus, the 103-residue chain is ATP synthase F(0) complex subunit g, mitochondrial (103 aa).

Ala-2 carries the N-acetylalanine modification. 4 positions are modified to N6-acetyllysine: Lys-11, Lys-24, Lys-35, and Lys-54.

It belongs to the ATPase g subunit family. As to quaternary structure, component of the ATP synthase complex composed at least of ATP5F1A/subunit alpha, ATP5F1B/subunit beta, ATP5MC1/subunit c (homooctomer), MT-ATP6/subunit a, MT-ATP8/subunit 8, ATP5ME/subunit e, ATP5MF/subunit f, ATP5MG/subunit g, ATP5MK/subunit k, ATP5MJ/subunit j, ATP5F1C/subunit gamma, ATP5F1D/subunit delta, ATP5F1E/subunit epsilon, ATP5PF/subunit F6, ATP5PB/subunit b, ATP5PD/subunit d, ATP5PO/subunit OSCP. ATP synthase complex consists of a soluble F(1) head domain (subunits alpha(3) and beta(3)) - the catalytic core - and a membrane F(0) domain - the membrane proton channel (subunits c, a, 8, e, f, g, k and j). These two domains are linked by a central stalk (subunits gamma, delta, and epsilon) rotating inside the F1 region and a stationary peripheral stalk (subunits F6, b, d, and OSCP).

The protein localises to the mitochondrion. It is found in the mitochondrion inner membrane. Its function is as follows. Subunit g, of the mitochondrial membrane ATP synthase complex (F(1)F(0) ATP synthase or Complex V) that produces ATP from ADP in the presence of a proton gradient across the membrane which is generated by electron transport complexes of the respiratory chain. ATP synthase complex consist of a soluble F(1) head domain - the catalytic core - and a membrane F(1) domain - the membrane proton channel. These two domains are linked by a central stalk rotating inside the F(1) region and a stationary peripheral stalk. During catalysis, ATP synthesis in the catalytic domain of F(1) is coupled via a rotary mechanism of the central stalk subunits to proton translocation. In vivo, can only synthesize ATP although its ATP hydrolase activity can be activated artificially in vitro. Part of the complex F(0) domain. In Homo sapiens (Human), this protein is ATP synthase F(0) complex subunit g, mitochondrial.